A 141-amino-acid chain; its full sequence is Large ribosomal subunit protein uL11 (141 aa).

The protein belongs to the universal ribosomal protein uL11 family. As to quaternary structure, part of the ribosomal stalk of the 50S ribosomal subunit. Interacts with L10 and the large rRNA to form the base of the stalk. L10 forms an elongated spine to which L12 dimers bind in a sequential fashion forming a multimeric L10(L12)X complex. One or more lysine residues are methylated.

In terms of biological role, forms part of the ribosomal stalk which helps the ribosome interact with GTP-bound translation factors. The sequence is that of Large ribosomal subunit protein uL11 from Limosilactobacillus reuteri (strain DSM 20016) (Lactobacillus reuteri).